Here is a 160-residue protein sequence, read N- to C-terminus: uncharacterized protein (160 aa).

At 1–33 (MPLRPCRHHQGFLPKKQWRAKFPQLIVLMGRVA) the chain is on the extracellular side. A helical membrane pass occupies residues 34 to 54 (AEELLPAVAVAAVVVAVVVAV). The Cytoplasmic segment spans residues 55 to 68 (ERVVPLLFVHRPDS). The chain crosses the membrane as a helical span at residues 69-89 (FFLIFFFQSCFVCCCCCCSCS). At 90–119 (TSLKAYSSEKEKQKYGKRGNGNTPLVQRLV) the chain is on the extracellular side. A helical transmembrane segment spans residues 120–140 (TLSYLALLILVLSIELLTWFV). At 141-160 (KKQRTGNKKQKDKEKNALLL) the chain is on the cytoplasmic side.

It localises to the membrane. This is an uncharacterized protein from Saccharomyces cerevisiae (strain ATCC 204508 / S288c) (Baker's yeast).